Consider the following 118-residue polypeptide: Large ribosomal subunit protein bL20 (118 aa).

The protein belongs to the bacterial ribosomal protein bL20 family.

Binds directly to 23S ribosomal RNA and is necessary for the in vitro assembly process of the 50S ribosomal subunit. It is not involved in the protein synthesizing functions of that subunit. The chain is Large ribosomal subunit protein bL20 from Hahella chejuensis (strain KCTC 2396).